The sequence spans 594 residues: MLKRRQPKYCSFMDSIDNSTTIIRKNLNRFIRELTDDGKLDFESIPYQNLQKEVANQDEEGCENVIEVLLDTTSRSGCPDRKLILQLFNSFFLQFPIFRENLLNDPSEFLELMFETNPIRNPLPGSKKHGNELKVEAITVIKSWEKEKCVKNDARMKCLVVTLKKTKFVDYENGAKKIEAERKRKKILEERKMKMIENSVNVYSSKYHEIKNDAETLSMELTTTMQMLVPSFTTADPEVPSTSTSTPSAISDSKSFEIFIPDLTPEISVSSENDAIVEAFLGAKLSLIHRVQTLRKLVKRLQLLKQPGEKLAQEIIDYRDGIKNLVLKADELRIINPRPPKNKRKKSDDDFIDVDISIDDILMVQYAEKLEVDVKSKDESEKITESPEKHKIEMKNEKPVKIKTVPFGLDLKYWGEERKDVEVPKNNADCHRFWRSADEGTVAGKAQQSIYTQRQYTFIGKAPDNRKVCLAKMKSGKLCPRKDYYTCPLHGKIVDRDDEGRPINEEDRLEENYRKEQNHLKEADKIRQMIEKEYESKTKRRKKHDVDTTASEDVRNRLQKKLLDPKTIQRVSADLDASRKNRLEKNFGQQFSHF.

The tract at residues 24–170 (RKNLNRFIRE…VTLKKTKFVD (147 aa)) is VHS-like. The stretch at 170–198 (DYENGAKKIEAERKRKKILEERKMKMIEN) forms a coiled coil. The UVSSA-type zinc finger occupies 466-493 (RKVCLAKMKSGKLCPRKDYYTCPLHGKI). Cys469, Cys479, Cys487, and His490 together coordinate Zn(2+). Residues 503-540 (INEEDRLEENYRKEQNHLKEADKIRQMIEKEYESKTKR) are a coiled coil. A disordered region spans residues 533–558 (EYESKTKRRKKHDVDTTASEDVRNRL). Over residues 544–558 (HDVDTTASEDVRNRL) the composition is skewed to basic and acidic residues.

It belongs to the UVSSA family.

It is found in the chromosome. Its function is as follows. Factor involved in transcription-coupled nucleotide excision repair (TC-NER) in response to UV damage. TC-NER allows RNA polymerase II-blocking lesions to be rapidly removed from the transcribed strand of active genes. This is UV-stimulated scaffold protein A homolog from Caenorhabditis elegans.